Here is a 489-residue protein sequence, read N- to C-terminus: Pluviatolide synthase (489 aa).

The helical transmembrane segment at 6–26 (SVLAMSSTLILALAMALIFLF) threads the bilayer. Cys432 contacts heme.

It belongs to the cytochrome P450 family. Heme is required as a cofactor. Expressed in leaves, rhizomes and stems.

The protein resides in the membrane. The enzyme catalyses (-)-matairesinol + reduced [NADPH--hemoprotein reductase] + O2 = (-)-pluviatolide + oxidized [NADPH--hemoprotein reductase] + 2 H2O + H(+). The protein operates within aromatic compound metabolism; phenylpropanoid biosynthesis. Its function is as follows. Cytochrome P450 involved in the biosynthesis of etoposide, a chemotherapeutic compound of the topoisomerase inhibitor family. Catalyzes the conversion of matairesinol to pluviatolide. This is Pluviatolide synthase from Sinopodophyllum hexandrum (Himalayan may apple).